The sequence spans 345 residues: Ribosomal RNA small subunit methyltransferase C (345 aa).

Belongs to the methyltransferase superfamily. RsmC family. Monomer.

Its subcellular location is the cytoplasm. The catalysed reaction is guanosine(1207) in 16S rRNA + S-adenosyl-L-methionine = N(2)-methylguanosine(1207) in 16S rRNA + S-adenosyl-L-homocysteine + H(+). Specifically methylates the guanine in position 1207 of 16S rRNA in the 30S particle. In Shewanella denitrificans (strain OS217 / ATCC BAA-1090 / DSM 15013), this protein is Ribosomal RNA small subunit methyltransferase C.